The chain runs to 241 residues: Host range factor p28 (241 aa).

Residues 21–131 (YIDEPNDIRL…QSILRGLVNW (111 aa)) enclose the KilA-N domain. An RING-type zinc finger spans residues 172 to 225 (CGICYEVVYSKRLENDRYFGLLDSCNHIFCITCINIWHRTRRETGASDNCPICR).

This sequence belongs to the orthopoxvirus OPG021 family.

Its subcellular location is the host cytoplasm. The enzyme catalyses S-ubiquitinyl-[E2 ubiquitin-conjugating enzyme]-L-cysteine + [acceptor protein]-L-lysine = [E2 ubiquitin-conjugating enzyme]-L-cysteine + N(6)-ubiquitinyl-[acceptor protein]-L-lysine.. Functionally, RING-finger E3 ubiquitin ligase which catalyzes the formation of both 'Lys-48'- and 'Lys-63'-linked polyubiquitin chains. Plays an important role in virulence by acting as an anti-apoptotic factor. The sequence is that of Host range factor p28 (OPG021) from Ectromelia virus (strain Moscow) (ECTV).